The following is a 144-amino-acid chain: MIALIQRVSQAKVDVKGETIGKIGKGLLVLLGVEKEDNREKADKLAEKVLNYRIFSDENDKMNLNVQQAQGELLIVSQFTLAADTQKGLRPSFSKGASPALANELYEYFIQKCAEKLPVSTGQFAADMQVSLTNDGPVTFWLNV.

Residues 136–137 carry the Gly-cisPro motif, important for rejection of L-amino acids motif; it reads GP.

This sequence belongs to the DTD family. In terms of assembly, homodimer.

The protein resides in the cytoplasm. The enzyme catalyses glycyl-tRNA(Ala) + H2O = tRNA(Ala) + glycine + H(+). It carries out the reaction a D-aminoacyl-tRNA + H2O = a tRNA + a D-alpha-amino acid + H(+). An aminoacyl-tRNA editing enzyme that deacylates mischarged D-aminoacyl-tRNAs. Also deacylates mischarged glycyl-tRNA(Ala), protecting cells against glycine mischarging by AlaRS. Acts via tRNA-based rather than protein-based catalysis; rejects L-amino acids rather than detecting D-amino acids in the active site. By recycling D-aminoacyl-tRNA to D-amino acids and free tRNA molecules, this enzyme counteracts the toxicity associated with the formation of D-aminoacyl-tRNA entities in vivo and helps enforce protein L-homochirality. The polypeptide is D-aminoacyl-tRNA deacylase (Haemophilus influenzae (strain ATCC 51907 / DSM 11121 / KW20 / Rd)).